The following is a 113-amino-acid chain: Translation initiation factor IF-1, chloroplastic (113 aa).

The S1-like domain occupies 8–83 (REKKNPREAK…SKGRIIYRLP (76 aa)). A disordered region spans residues 86–113 (DSKRIEDSKDSEDLKDSEDLKDTKDSKD).

Belongs to the IF-1 family. In terms of assembly, component of the 30S ribosomal translation pre-initiation complex which assembles on the 30S ribosome in the order IF-2 and IF-3, IF-1 and N-formylmethionyl-tRNA(fMet); mRNA recruitment can occur at any time during PIC assembly.

Its subcellular location is the plastid. The protein resides in the chloroplast. Its function is as follows. One of the essential components for the initiation of protein synthesis. Stabilizes the binding of IF-2 and IF-3 on the 30S subunit to which N-formylmethionyl-tRNA(fMet) subsequently binds. Helps modulate mRNA selection, yielding the 30S pre-initiation complex (PIC). Upon addition of the 50S ribosomal subunit IF-1, IF-2 and IF-3 are released leaving the mature 70S translation initiation complex. The sequence is that of Translation initiation factor IF-1, chloroplastic from Hordeum vulgare (Barley).